Consider the following 548-residue polypeptide: CTP synthase (548 aa).

An amidoligase domain region spans residues M1–L276. S25 lines the CTP pocket. S25 contributes to the UTP binding site. G26–I31 provides a ligand contact to ATP. Y66 lines the L-glutamine pocket. Residue D83 participates in ATP binding. Mg(2+) is bound by residues D83 and E151. CTP-binding positions include D158 to E160, K197 to Q202, and K233. UTP is bound by residues K197–Q202 and K233. In terms of domain architecture, Glutamine amidotransferase type-1 spans D303–T541. G363 provides a ligand contact to L-glutamine. The active-site Nucleophile; for glutamine hydrolysis is the C390. Residues L391 to Q394, E414, and R471 contribute to the L-glutamine site. Residues H514 and E516 contribute to the active site.

Belongs to the CTP synthase family. As to quaternary structure, homotetramer.

It carries out the reaction UTP + L-glutamine + ATP + H2O = CTP + L-glutamate + ADP + phosphate + 2 H(+). The catalysed reaction is L-glutamine + H2O = L-glutamate + NH4(+). The enzyme catalyses UTP + NH4(+) + ATP = CTP + ADP + phosphate + 2 H(+). The protein operates within pyrimidine metabolism; CTP biosynthesis via de novo pathway; CTP from UDP: step 2/2. Allosterically activated by GTP, when glutamine is the substrate; GTP has no effect on the reaction when ammonia is the substrate. The allosteric effector GTP functions by stabilizing the protein conformation that binds the tetrahedral intermediate(s) formed during glutamine hydrolysis. Inhibited by the product CTP, via allosteric rather than competitive inhibition. Catalyzes the ATP-dependent amination of UTP to CTP with either L-glutamine or ammonia as the source of nitrogen. Regulates intracellular CTP levels through interactions with the four ribonucleotide triphosphates. This Natronomonas pharaonis (strain ATCC 35678 / DSM 2160 / CIP 103997 / JCM 8858 / NBRC 14720 / NCIMB 2260 / Gabara) (Halobacterium pharaonis) protein is CTP synthase.